The following is a 161-amino-acid chain: 2-C-methyl-D-erythritol 2,4-cyclodiphosphate synthase (161 aa).

A divalent metal cation contacts are provided by Asp-11 and His-13. Residues 11 to 13 and 37 to 38 each bind 4-CDP-2-C-methyl-D-erythritol 2-phosphate; these read DIH and HS. Residue His-45 participates in a divalent metal cation binding. Residues 59 to 61, 135 to 138, and Arg-145 contribute to the 4-CDP-2-C-methyl-D-erythritol 2-phosphate site; these read DIG and TTNE.

Belongs to the IspF family. In terms of assembly, homotrimer. A divalent metal cation is required as a cofactor.

It carries out the reaction 4-CDP-2-C-methyl-D-erythritol 2-phosphate = 2-C-methyl-D-erythritol 2,4-cyclic diphosphate + CMP. It participates in isoprenoid biosynthesis; isopentenyl diphosphate biosynthesis via DXP pathway; isopentenyl diphosphate from 1-deoxy-D-xylulose 5-phosphate: step 4/6. In terms of biological role, involved in the biosynthesis of isopentenyl diphosphate (IPP) and dimethylallyl diphosphate (DMAPP), two major building blocks of isoprenoid compounds. Catalyzes the conversion of 4-diphosphocytidyl-2-C-methyl-D-erythritol 2-phosphate (CDP-ME2P) to 2-C-methyl-D-erythritol 2,4-cyclodiphosphate (ME-CPP) with a corresponding release of cytidine 5-monophosphate (CMP). This is 2-C-methyl-D-erythritol 2,4-cyclodiphosphate synthase from Synechocystis sp. (strain ATCC 27184 / PCC 6803 / Kazusa).